Here is a 218-residue protein sequence, read N- to C-terminus: Large ribosomal subunit protein bL25 (218 aa).

Belongs to the bacterial ribosomal protein bL25 family. CTC subfamily. In terms of assembly, part of the 50S ribosomal subunit; part of the 5S rRNA/L5/L18/L25 subcomplex. Contacts the 5S rRNA. Binds to the 5S rRNA independently of L5 and L18.

This is one of the proteins that binds to the 5S RNA in the ribosome where it forms part of the central protuberance. This Gluconobacter oxydans (strain 621H) (Gluconobacter suboxydans) protein is Large ribosomal subunit protein bL25.